The chain runs to 146 residues: NADH-ubiquinone oxidoreductase chain 6 (146 aa).

4 helical membrane-spanning segments follow: residues 10–30 (ILAI…LLFV), 43–63 (LMGI…FLFI), 81–101 (VIVL…PIAI), and 124–144 (APML…AIAM).

Belongs to the complex I subunit 6 family.

It localises to the mitochondrion membrane. It carries out the reaction a ubiquinone + NADH + 5 H(+)(in) = a ubiquinol + NAD(+) + 4 H(+)(out). In terms of biological role, core subunit of the mitochondrial membrane respiratory chain NADH dehydrogenase (Complex I) that is believed to belong to the minimal assembly required for catalysis. Complex I functions in the transfer of electrons from NADH to the respiratory chain. The immediate electron acceptor for the enzyme is believed to be ubiquinone. The protein is NADH-ubiquinone oxidoreductase chain 6 (NAD6) of Candida albicans (strain SC5314 / ATCC MYA-2876) (Yeast).